Here is a 248-residue protein sequence, read N- to C-terminus: Tyrosine recombinase XerD-like (248 aa).

A Core-binding (CB) domain is found at 1-72 (MKSYIEPFIA…TANQFLYYLY (72 aa)). Residues 85-248 (DTMKVMRTEK…PVTLEKYYKS (164 aa)) enclose the Tyr recombinase domain. Active-site residues include K149 and R213. Y245 acts as the O-(3'-phospho-DNA)-tyrosine intermediate in catalysis.

This sequence belongs to the 'phage' integrase family. XerD-like subfamily.

It localises to the cytoplasm. Its function is as follows. Putative tyrosine recombinase. Not involved in the cutting and rejoining of the recombining DNA molecules on dif(SL) site. The chain is Tyrosine recombinase XerD-like from Streptococcus pyogenes serotype M18 (strain MGAS8232).